We begin with the raw amino-acid sequence, 98 residues long: NADH-ubiquinone oxidoreductase chain 4L (98 aa).

The next 3 membrane-spanning stretches (helical) occupy residues 1 to 21, 29 to 49, and 58 to 78; these read MPIIYMNIMLSFIISLLGMLI, SLLCLEGMMLSLFIMSTLMAL, and IVPVALLVFAACEAAVGLALL.

It belongs to the complex I subunit 4L family. As to quaternary structure, core subunit of respiratory chain NADH dehydrogenase (Complex I) which is composed of 45 different subunits.

The protein resides in the mitochondrion inner membrane. The enzyme catalyses a ubiquinone + NADH + 5 H(+)(in) = a ubiquinol + NAD(+) + 4 H(+)(out). In terms of biological role, core subunit of the mitochondrial membrane respiratory chain NADH dehydrogenase (Complex I) which catalyzes electron transfer from NADH through the respiratory chain, using ubiquinone as an electron acceptor. Part of the enzyme membrane arm which is embedded in the lipid bilayer and involved in proton translocation. The polypeptide is NADH-ubiquinone oxidoreductase chain 4L (MT-ND4L) (Semnopithecus entellus (Northern plains gray langur)).